The following is a 547-amino-acid chain: Chaperonin GroEL 1 (547 aa).

ATP-binding positions include 30 to 33 (TLGP), lysine 51, 87 to 91 (DGTTT), glycine 415, and aspartate 494. Residues 524–547 (PKGKAKGGGAGAGMPDYGGDDMDY) are disordered.

This sequence belongs to the chaperonin (HSP60) family. In terms of assembly, forms a cylinder of 14 subunits composed of two heptameric rings stacked back-to-back. Interacts with the co-chaperonin GroES.

It is found in the cytoplasm. It carries out the reaction ATP + H2O + a folded polypeptide = ADP + phosphate + an unfolded polypeptide.. Functionally, together with its co-chaperonin GroES, plays an essential role in assisting protein folding. The GroEL-GroES system forms a nano-cage that allows encapsulation of the non-native substrate proteins and provides a physical environment optimized to promote and accelerate protein folding. This chain is Chaperonin GroEL 1, found in Myxococcus xanthus (strain DK1622).